A 304-amino-acid chain; its full sequence is Xylanase inhibitor protein 1 (304 aa).

A signal peptide spans 1 to 30 (MAPLAARRPACLLALLSVAAALFLTPTALA). One can recognise a GH18 domain in the interval 36-304 (GQVTVFWGRN…NYSSLIKYYA (269 aa)). The cysteines at positions 55 and 96 are disulfide-linked. Residue N119 is glycosylated (N-linked (GlcNAc...) asparagine). The active-site Proton donor is E158. An interaction with fungal GH11 xylanase region spans residues 178–184 (IRGGPGK). C194 and C225 are disulfide-bonded. Residues 262–275 (HPKNVYYGVAPVAQ) form an interaction with fungal GH10 xylanase region. An N-linked (GlcNAc...) asparagine glycan is attached at N295.

Belongs to the glycosyl hydrolase 18 family. Xylanase inhibitor subfamily. As to quaternary structure, binds to fungal GH10 and GH11 xylanases. Also forms a ternary complex with barley alpha-amylase 1 (AMY1) and insoluble starch.

The protein localises to the secreted. Its function is as follows. Fungal xylanase inhibitor. Possesses competitive inhibiting activity against fungal endo-1,4-beta-D-xylanases belonging to glycoside hydrolase family 10 (GH10) and family 11 (GH11). Possesses also inhibitory activity towards barley alpha-amylases. Binding to xylanases or amylases is necessary for inhibition activity. May function in plant defense against secreted fungal pathogen xylanases. Is similar to class III chitinases, but does not exhibit chitinase activity. This chain is Xylanase inhibitor protein 1, found in Triticum aestivum (Wheat).